The primary structure comprises 190 residues: Cancer-related nucleoside-triphosphatase homolog (190 aa).

ATP contacts are provided by residues Gly-9 to Thr-16 and Val-109 to Gly-116. An N6-acetyllysine modification is found at Lys-165.

The protein belongs to the THEP1 NTPase family. As to quaternary structure, monomer.

It catalyses the reaction a ribonucleoside 5'-triphosphate + H2O = a ribonucleoside 5'-diphosphate + phosphate + H(+). The catalysed reaction is 5-methyl-UTP + H2O = 5-methyl-UDP + phosphate + H(+). The enzyme catalyses CTP + H2O = CDP + phosphate + H(+). It carries out the reaction ATP + H2O = ADP + phosphate + H(+). It catalyses the reaction GTP + H2O = GDP + phosphate + H(+). In terms of biological role, has nucleotide phosphatase activity towards ATP, GTP, CTP, TTP and UTP. Hydrolyzes nucleoside diphosphates with lower efficiency. The polypeptide is Cancer-related nucleoside-triphosphatase homolog (Mus musculus (Mouse)).